The chain runs to 181 residues: Acireductone dioxygenase 2 (181 aa).

Fe(2+)-binding residues include His-97, His-99, Glu-103, and His-141. Residues His-97, His-99, Glu-103, and His-141 each coordinate Ni(2+).

The protein belongs to the acireductone dioxygenase (ARD) family. In terms of assembly, monomer. Fe(2+) is required as a cofactor. Requires Ni(2+) as cofactor.

It catalyses the reaction 1,2-dihydroxy-5-(methylsulfanyl)pent-1-en-3-one + O2 = 3-(methylsulfanyl)propanoate + CO + formate + 2 H(+). The enzyme catalyses 1,2-dihydroxy-5-(methylsulfanyl)pent-1-en-3-one + O2 = 4-methylsulfanyl-2-oxobutanoate + formate + 2 H(+). It functions in the pathway amino-acid biosynthesis; L-methionine biosynthesis via salvage pathway; L-methionine from S-methyl-5-thio-alpha-D-ribose 1-phosphate: step 5/6. Catalyzes 2 different reactions between oxygen and the acireductone 1,2-dihydroxy-3-keto-5-methylthiopentene (DHK-MTPene) depending upon the metal bound in the active site. Fe-containing acireductone dioxygenase (Fe-ARD) produces formate and 2-keto-4-methylthiobutyrate (KMTB), the alpha-ketoacid precursor of methionine in the methionine recycle pathway. Ni-containing acireductone dioxygenase (Ni-ARD) produces methylthiopropionate, carbon monoxide and formate, and does not lie on the methionine recycle pathway. The polypeptide is Acireductone dioxygenase 2 (Pectobacterium atrosepticum (strain SCRI 1043 / ATCC BAA-672) (Erwinia carotovora subsp. atroseptica)).